The chain runs to 146 residues: Hemoglobin subunit beta (146 aa).

Position 1 is an N-acetylvaline (valine 1). The 145-residue stretch at 2–146 (HLTAEEKSAV…VATALAHKYH (145 aa)) folds into the Globin domain. Threonine 12 carries the phosphothreonine modification. The residue at position 44 (serine 44) is a Phosphoserine. Position 59 is an N6-acetyllysine (lysine 59). Histidine 63 serves as a coordination point for heme b. The residue at position 82 (lysine 82) is an N6-acetyllysine. Residue histidine 92 participates in heme b binding. The residue at position 93 (cysteine 93) is an S-nitrosocysteine. Lysine 144 is modified (N6-acetyllysine).

The protein belongs to the globin family. Heterotetramer of two alpha chains and two beta chains. In terms of tissue distribution, red blood cells.

Functionally, involved in oxygen transport from the lung to the various peripheral tissues. This is Hemoglobin subunit beta (HBB) from Cebus albifrons (White-fronted capuchin).